The chain runs to 593 residues: Efflux pump FUBT (593 aa).

Residues 1–44 (MAIDPQPSSPSLSSETIANDTIGNDNNVNEPSVEPKTQENQHTV) are disordered. The span at 9–30 (SPSLSSETIANDTIGNDNNVNE) shows a compositional bias: polar residues. The N-linked (GlcNAc...) asparagine glycan is linked to N19. The next 12 membrane-spanning stretches (helical) occupy residues 98 to 118 (WAFVLLQSLACLATTFASSAY), 135 to 155 (VATLGISLYVLGFTFGPLIWA), 167 to 187 (FFFTFMVATAFSAGAAGAGSI), 195 to 215 (FLTGSIGSAPLSNAPALIADM), 227 to 247 (MFSGAPFLGPAIGPIAGGFLG), 254 to 274 (WLHGLMAAFTGVTWIACTVFI), 337 to 357 (IYISIIYGTMYMCFAAFPIVF), 367 to 387 (IGGLAFTGIVIGVVLSIISFA), 410 to 430 (LPPAIMGSLLIPIGLFWFAWT), 438 to 458 (IVPIIGTVFFAWGLVLVFMAL), 468 to 488 (IFAASIMAANSALRSLFGAAF), and 503 to 523 (WASSIPAFLALACVPFPFLFY). Residues 570 to 593 (THNSHASAAHSHGHRRSLSYTRSV) form a disordered region.

This sequence belongs to the major facilitator superfamily. DHA1 family. Polyamines/proton antiporter (TC 2.A.1.2.16) subfamily.

Its subcellular location is the cell membrane. Functionally, efflux pump involved in export of fusaric acid, a mycotoxin with low to moderate toxicity to animals and humans, but with high phytotoxic properties. Constitutes a self-protecting mechanism of the fungus against critical levels of FSA within the cell. In Fusarium oxysporum (Fusarium vascular wilt), this protein is Efflux pump FUBT.